The sequence spans 426 residues: Colanic acid biosynthesis protein WcaK (426 aa).

Belongs to the polysaccharide pyruvyl transferase family.

The protein operates within slime biogenesis; slime polysaccharide biosynthesis. This is Colanic acid biosynthesis protein WcaK (wcaK) from Escherichia coli (strain K12).